Consider the following 313-residue polypeptide: Ribosomal RNA small subunit methyltransferase H (313 aa).

S-adenosyl-L-methionine is bound by residues 35-37 (GGH), Asp-55, Phe-79, Asp-101, and Gln-108.

This sequence belongs to the methyltransferase superfamily. RsmH family.

The protein resides in the cytoplasm. The catalysed reaction is cytidine(1402) in 16S rRNA + S-adenosyl-L-methionine = N(4)-methylcytidine(1402) in 16S rRNA + S-adenosyl-L-homocysteine + H(+). Specifically methylates the N4 position of cytidine in position 1402 (C1402) of 16S rRNA. In Musicola paradisiaca (strain Ech703) (Dickeya paradisiaca), this protein is Ribosomal RNA small subunit methyltransferase H.